A 155-amino-acid polypeptide reads, in one-letter code: Protein SREK1IP1 (155 aa).

The segment at Ala13 to Asn30 adopts a CCHC-type zinc-finger fold. The disordered stretch occupies residues Asp43–Asp155. Positions Glu58–Lys74 are enriched in basic and acidic residues. The span at Lys75–His93 shows a compositional bias: basic residues. Over residues Ser94–Lys103 the composition is skewed to basic and acidic residues. Residues Ala104 to Arg137 are compositionally biased toward basic residues. Residues Ser140–Asp155 show a composition bias toward low complexity.

In terms of biological role, possible splicing regulator involved in the control of cellular survival. The chain is Protein SREK1IP1 (srek1ip1) from Xenopus tropicalis (Western clawed frog).